The primary structure comprises 341 residues: UDP-3-O-acylglucosamine N-acyltransferase (341 aa).

The active-site Proton acceptor is the H242.

Belongs to the transferase hexapeptide repeat family. LpxD subfamily. In terms of assembly, homotrimer.

The catalysed reaction is a UDP-3-O-[(3R)-3-hydroxyacyl]-alpha-D-glucosamine + a (3R)-hydroxyacyl-[ACP] = a UDP-2-N,3-O-bis[(3R)-3-hydroxyacyl]-alpha-D-glucosamine + holo-[ACP] + H(+). Its pathway is bacterial outer membrane biogenesis; LPS lipid A biosynthesis. Functionally, catalyzes the N-acylation of UDP-3-O-acylglucosamine using 3-hydroxyacyl-ACP as the acyl donor. Is involved in the biosynthesis of lipid A, a phosphorylated glycolipid that anchors the lipopolysaccharide to the outer membrane of the cell. The protein is UDP-3-O-acylglucosamine N-acyltransferase of Haemophilus influenzae (strain ATCC 51907 / DSM 11121 / KW20 / Rd).